A 585-amino-acid polypeptide reads, in one-letter code: MVDHVSENSTNVLSAKRKLTEPSLIDSKRVFPCDQCAKRFTRHENLTRHKACHSKAEPIPCPYCEIKCKRKDLLKRHIQRFHNDKSVIEEGSKDVLDVKAAASQQEDNMKIVLPSFDAIDVPKAYHPSLRPYFTILPLIPSDFLEHYIEGYFEWFHPVFPFIHQASFNSENVAASFLRSLVVIACLCTGIESDFSMALLFWDSGFHVLQLYLQGDPERVKKAWVFQSRLLFCTASLFEKTACFSGIGHVLLKDLVHESRTFGWTKLNWSVEGDTDISNLIDLECIRRSVFCLYILEWFLALIFNKPPSLSVLELQMPLPISSALWSSKELLSKDYWRPNPLNPRDALSILVNGPLLLEETNISGFVLLFAIFEFIRDEAKLSMIGLPRQPNRSYEIMLQHLKVSMELSNPCAKTSSIFLCLWHLVLTYYYLPDPLFLRSITLTDLESATSYFKDDSWMDDDYISPCMTTYNLTMGWENVIWGLRYAETELTKFKFDLPVPHLTLFRIFLQGLYALRDFDQISTSSLQTFTMLWKKLSTSLNMKEDAQNTAPSTCVKEFSAFVASALDVEGGWGIGPLLTKAFRPT.

2 C2H2-type zinc fingers span residues 31 to 53 (FPCDQCAKRFTRHENLTRHKACH) and 59 to 82 (IPCPYCEIKCKRKDLLKRHIQRFH). At threonine 553 the chain carries Phosphothreonine.

It localises to the nucleus. The sequence is that of Zinc finger protein C11D3.17 from Schizosaccharomyces pombe (strain 972 / ATCC 24843) (Fission yeast).